The primary structure comprises 119 residues: Anamorsin homolog (119 aa).

Positions 1-15 (MSSSATSTQAFSLKT) are enriched in polar residues. 2 disordered regions span residues 1 to 21 (MSSSATSTQAFSLKTRQPIPD) and 33 to 119 (LKQA…TDDV). Cysteine 42, cysteine 49, cysteine 52, and cysteine 54 together coordinate [2Fe-2S] cluster. The tract at residues 42–54 (CTTRRRACKNCVC) is fe-S binding site A. 4 residues coordinate [4Fe-4S] cluster: cysteine 81, cysteine 84, cysteine 92, and cysteine 95. 2 short sequence motifs (cx2C motif) span residues 81-84 (CGNC) and 92-95 (CANC). The interval 81-95 (CGNCSKGDAFRCANC) is fe-S binding site B.

It belongs to the anamorsin family. In terms of assembly, monomer. The cofactor is [2Fe-2S] cluster. It depends on [4Fe-4S] cluster as a cofactor.

The protein localises to the cytoplasm. It localises to the mitochondrion intermembrane space. Functionally, component of the cytosolic iron-sulfur (Fe-S) protein assembly (CIA) machinery. Required for the maturation of extramitochondrial Fe-S proteins. Part of an electron transfer chain functioning in an early step of cytosolic Fe-S biogenesis, facilitating the de novo assembly of a [4Fe-4S] cluster on the cytosolic Fe-S scaffold complex. Electrons are transferred from NADPH via a FAD- and FMN-containing diflavin oxidoreductase. Together with the diflavin oxidoreductase, also required for the assembly of the diferric tyrosyl radical cofactor of ribonucleotide reductase (RNR), probably by providing electrons for reduction during radical cofactor maturation in the catalytic small subunit. In Leishmania infantum, this protein is Anamorsin homolog.